We begin with the raw amino-acid sequence, 118 residues long: Large ribosomal subunit protein uL18 (118 aa).

The interval 1–25 (MISKPDKNKLRQKRHRRVRGKLSGT) is disordered. Residues 10–20 (LRQKRHRRVRG) show a composition bias toward basic residues.

Belongs to the universal ribosomal protein uL18 family. Part of the 50S ribosomal subunit; part of the 5S rRNA/L5/L18/L25 subcomplex. Contacts the 5S and 23S rRNAs.

This is one of the proteins that bind and probably mediate the attachment of the 5S RNA into the large ribosomal subunit, where it forms part of the central protuberance. The chain is Large ribosomal subunit protein uL18 from Streptococcus pneumoniae (strain Hungary19A-6).